Here is a 443-residue protein sequence, read N- to C-terminus: Diels-Alderase poxQ (443 aa).

A signal peptide spans 1-23; the sequence is MARIPLEFLSITLPVLLLAYCLA. N-linked (GlcNAc...) asparagine glycosylation is found at N78, N97, and N145.

It belongs to the Diels-Alderase family.

It functions in the pathway secondary metabolite biosynthesis. Functionally, diels-Alderase; part of the gene cluster that mediates the biosynthesis of oxaleimides, cytotoxic compounds containing an unusual disubstituted succinimide moiety. The first step of the pathway is provided by the HR-PKS poxF that serves in a new mode of collaborative biosynthesis with the PKS-NRPS poxE, by providing the olefin containing amino acid substrate via the synthesis of an ACP-bound dec-4-enoate. The cytochrome P450 monooxygenase poxM-catalyzed oxidation at the alpha-position creates the enzyme-bound 2-hydroxydec-4-enoyl-ACP thioester, which may be prone to spontaneous hydrolysis to yield 2-hydroxydec-4-enoic acid due to increased electrophilicity of the carbonyl. 2-hydroxydec-4-enoic acid can then be further oxidized by poxM to yield the alpha-ketoacid 2-oxodec-4-enoicacid, which is reductively aminated by the aminotransferase poxL to yield (S,E)-2-aminodec-4-enoic acid. The Hybrid PKS-NRPS synthetase poxE then performs condensation between the octaketide product of its PKS modules and the amino group of (S,E)-2-aminodec-4-enoic acid which is activated and incorporated by the adenylation domain. The resulting aminoacyl product can be cyclized by the Diels-Alderase PoxQ and reductively released by the reductive (R) domain of poxE to yield an aldehyde intermediate. The released aldehyde is then substrate for a Knoevenagel condensation by the hydrolyase poxO followed by an oxidation at the 5-position of the pyrrolidone ring. The presence of the olefin from the amino acid building block allows for migration of the substituted allyl group to occur. This allylic transposition reaction takes place in a conjugate addition, semipinacol-like fashion to yield a succinimide intermediate. Iterative two-electron oxidations of the C7 methyl of the succinimide intermediate to the carboxylic acid can be catalyzed by one of two remaining cytochrome P450 monooxygenasess poxC or poxD to yield oxaleimide A. Subsequent oxidation yields the maleimide scaffold oxaleimide I. Both oxaleimide A and oxaleimide I can undergo oxidative modifications in the decalin ring to yield the series of products oxaleimides B to H. The polypeptide is Diels-Alderase poxQ (Penicillium oxalicum (strain 114-2 / CGMCC 5302) (Penicillium decumbens)).